We begin with the raw amino-acid sequence, 159 residues long: Putative transmembrane protein ORF159 (159 aa).

A run of 2 helical transmembrane segments spans residues 20–40 and 59–79; these read LLLS…LSLF and IIAV…GFCC. The Cell attachment site signature appears at 106–108; the sequence is RGD.

It is found in the host membrane. The protein is Putative transmembrane protein ORF159 of Acidianus sp. F28 (AFV-2).